Consider the following 468-residue polypeptide: Monocarboxylate transporter 6 (468 aa).

The Cytoplasmic portion of the chain corresponds to 1–13 (MARALEQADGRWA). A helical membrane pass occupies residues 14–34 (WVVLLSSLVTQALTLGFPTCI). At 35-53 (GVFFTDLQRDFQASNSETS) the chain is on the extracellular side. A helical transmembrane segment spans residues 54–74 (WFPSILGAMVHGGGPLCSILV). Topologically, residues 75–80 (KHFGCR) are cytoplasmic. Residues 81–101 (VTMMLGGVLASLGMVVSTFSG) traverse the membrane as a helical segment. A topological domain (extracellular) is located at residue Ser-102. The chain crosses the membrane as a helical span at residues 103–122 (LTHLFLTAGVITGLGMCFSF). The Cytoplasmic portion of the chain corresponds to 123-138 (QSSITVVGLYFVRRRP). The helical transmembrane segment at 139–159 (LANALASMGLSMGVTLWPLLA) threads the bilayer. At 160–171 (RYLLETLGWRGA) the chain is on the extracellular side. The chain crosses the membrane as a helical span at residues 172–192 (FLIFGGILLHCCVCGALLRPV). The Cytoplasmic segment spans residues 193–239 (ATNEVPEPKEDPLLPPKIPTRSCLATCVSTIRYHLAFDILRHNMGFC). Residues 240–260 (IYVTGVTWMNLGFALPHIFLV) traverse the membrane as a helical segment. Topologically, residues 261-274 (PYAMHHGVDDYWAA) are extracellular. Residues 275 to 295 (MLMSIVGFCNIFLRPMAGLLL) traverse the membrane as a helical segment. Over 296 to 306 (AGRKSLAAYRK) the chain is Cytoplasmic. Residues 307-327 (YLFAVAILINGLTNLICTVSA) traverse the membrane as a helical segment. Residues 328–330 (DFR) lie on the Extracellular side of the membrane. Residues 331 to 351 (VLLGYCLVYSLSMCGVGILVF) form a helical membrane-spanning segment. At 352 to 368 (QVLMDIVPMDRFPSALG) the chain is on the cytoplasmic side. The helical transmembrane segment at 369–389 (LFTILCGVTSLISPPLAGLLL) threads the bilayer. At 390–396 (DKTNNFS) the chain is on the extracellular side. The helical transmembrane segment at 397-417 (YVFYMSSGFLVSGSLILGVGF) threads the bilayer. Residues 418–468 (YAAEKKKLKQDGQAKMENATSEMTPMHDLTSEDKDSAKKQPYPESIYMTNV) lie on the Cytoplasmic side of the membrane. The tract at residues 429–468 (GQAKMENATSEMTPMHDLTSEDKDSAKKQPYPESIYMTNV) is disordered. Over residues 446–455 (LTSEDKDSAK) the composition is skewed to basic and acidic residues.

This sequence belongs to the major facilitator superfamily. Monocarboxylate porter (TC 2.A.1.13) family.

Its subcellular location is the cell membrane. In terms of biological role, proton-linked monocarboxylate transporter. Catalyzes the rapid transport across the plasma membrane of many monocarboxylates such as lactate, pyruvate, branched-chain oxo acids derived from leucine, valine and isoleucine, and the ketone bodies acetoacetate, beta-hydroxybutyrate and acetate. This is Monocarboxylate transporter 6 (Slc16a5) from Mus musculus (Mouse).